We begin with the raw amino-acid sequence, 249 residues long: Acidic leucine-rich nuclear phosphoprotein 32 family member A (249 aa).

Thr-15 carries the post-translational modification Phosphothreonine. Ser-17 is subject to Phosphoserine. LRR repeat units follow at residues 18–41, 43–64, 65–87, and 89–110; these read DVKELVLDNCRSIEGKIEGLTDEF, ELEFLSTINVGLTSVANLPKLN, KLKKLELSDNRISGGLEVLAEKC, and NLTHLNLSGNKIKDLSTIEPLK. The LRRCT domain occupies 123 to 161; the sequence is CEVTNLNDYRENVFKLLPQLTYLDGYDRDDKEAPDSDAE. The segment covering 147–156 has biased composition (basic and acidic residues); it reads GYDRDDKEAP. Residues 147-249 form a disordered region; sequence GYDRDDKEAP…EPXDXGEDDD (103 aa). The segment at 150-174 is necessary for tumor-suppressive function; sequence RDDKEAPDSDAEGYVEGLDDDEEDE. The segment covering 157–230 has biased composition (acidic residues); it reads DSDAEGYVEG…DEEDEEDVGE (74 aa). Ser-158 and Ser-204 each carry phosphoserine. An interaction with E4F1 region spans residues 165-249; that stretch reads EGLDDDEEDE…EPXDXGEDDD (85 aa).

This sequence belongs to the ANP32 family. Component of the SET complex, composed of at least ANP32A, APEX1, HMGB2, NME1, SET and TREX1. Directly interacts with SET. Interacts with ATXN1/SCA1. Interacts with MAP1B. Interacts with ELAVL1. Part of the INHAT (inhibitor of histone acetyltransferases) complex. Interacts with E4F1. Phosphorylated on serine residues, at least in part by casein kinase 2/CK2. In terms of processing, some glutamate residues are glycylated by TTLL8. This modification occurs exclusively on glutamate residues and results in a glycine chain on the gamma-carboxyl group.

Its subcellular location is the nucleus. It localises to the cytoplasm. The protein resides in the endoplasmic reticulum. In terms of biological role, multifunctional protein that is involved in the regulation of many processes including tumor suppression, apoptosis, cell cycle progression or transcription. Promotes apoptosis by favouring the activation of caspase-9/CASP9 and allowing apoptosome formation. In addition, plays a role in the modulation of histone acetylation and transcription as part of the INHAT (inhibitor of histone acetyltransferases) complex. Inhibits the histone-acetyltranferase activity of EP300/CREBBP (CREB-binding protein) and EP300/CREBBP-associated factor by histone masking. Preferentially binds to unmodified histone H3 and sterically inhibiting its acetylation and phosphorylation leading to cell growth inhibition. Participates in other biochemical processes such as regulation of mRNA nuclear-to-cytoplasmic translocation and stability by its association with ELAVL1 (Hu-antigen R). Plays a role in E4F1-mediated transcriptional repression as well as inhibition of protein phosphatase 2A. The polypeptide is Acidic leucine-rich nuclear phosphoprotein 32 family member A (ANP32A) (Canis lupus familiaris (Dog)).